Reading from the N-terminus, the 337-residue chain is 1-aminocyclopropane-1-carboxylate deaminase (337 aa).

Lys-50 is modified (N6-(pyridoxal phosphate)lysine). Catalysis depends on Ser-77, which acts as the Nucleophile.

Belongs to the ACC deaminase/D-cysteine desulfhydrase family. As to quaternary structure, homotrimer. Pyridoxal 5'-phosphate is required as a cofactor.

The enzyme catalyses 1-aminocyclopropane-1-carboxylate + H2O = 2-oxobutanoate + NH4(+). Its function is as follows. Catalyzes a cyclopropane ring-opening reaction, the irreversible conversion of 1-aminocyclopropane-1-carboxylate (ACC) to ammonia and alpha-ketobutyrate. Allows growth on ACC as a nitrogen source. The sequence is that of 1-aminocyclopropane-1-carboxylate deaminase from Rhizobium radiobacter (Agrobacterium tumefaciens).